The chain runs to 198 residues: Large ribosomal subunit protein uL13 (198 aa).

This sequence belongs to the universal ribosomal protein uL13 family.

The chain is Large ribosomal subunit protein uL13 (RPL13A) from Tetrahymena thermophila (strain SB210).